A 221-amino-acid polypeptide reads, in one-letter code: NEDD8 ultimate buster 1 (221 aa).

3 UBA domains span residues 1 to 19 (LGLR…HIAN), 30 to 76 (EERE…LLHN), and 95 to 135 (SPSQ…LVHN). The tract at residues 136–193 (GGRLPPDLQLSAEDSSSTPSTSPSDSAGTSSASTDEDMETEAVNEILEDIPEHEEDYL) is disordered. Residues 146-168 (SAEDSSSTPSTSPSDSAGTSSAS) are compositionally biased toward low complexity. A compositionally biased stretch (acidic residues) spans 169-193 (TDEDMETEAVNEILEDIPEHEEDYL).

Directly interacts with NEDD8 and PSMD4/S5a, a member of the regulatory subunit of the 26S proteasome. Interacts with AIPL1.

It localises to the nucleus. Functionally, specific down-regulator of the NEDD8 conjugation system. Recruits NEDD8 and its conjugates to the proteasome for degradation. The sequence is that of NEDD8 ultimate buster 1 (NUB1) from Bos taurus (Bovine).